Consider the following 85-residue polypeptide: U4-theraphotoxin-Hhn1a (85 aa).

The signal sequence occupies residues 1 to 22 (MKVTLIAILTCAAVLVLHTTAA). Positions 23–48 (EELEAEGQLMEVGMPDTELAAVDEER) are excised as a propeptide. Cystine bridges form between Cys-52–Cys-66, Cys-56–Cys-77, and Cys-71–Cys-82.

Belongs to the neurotoxin 12 (Hwtx-2) family. 02 (Hwtx-2) subfamily. In terms of assembly, monomer. Expressed by the venom gland.

Its subcellular location is the secreted. Neurotoxin active on both insects and mammals. The chain is U4-theraphotoxin-Hhn1a from Cyriopagopus hainanus (Chinese bird spider).